Here is a 372-residue protein sequence, read N- to C-terminus: MSEHIILNPDETFTLNLGPQHPATHGVLRVKLTMDGEYIYSAETVIGYIHRMHEKMGENRTYNQYLPNLSRLDYLSAMAYCHGYVLAVEKAGSIEVPERAEYIRAITVELNRLSSHLVWFGAFIMDLGGFSPLMYAFDDREQILDLLESITGSRLTYCYYRFGGLYNDIDDEFLVGTRKFIIRMRKSLKTYRDLVTNNIILMKRLKDIGHISPEICRKYGATGPVARGSGINFDVRKNEPYSVYNEFDFDIPVYHEGDSYARYMVRMDEMEQSLRIIEQAMDKLPGGPIIPEKKPKIIKLPEGDYYSTVEAARGSFGIRLVSDGGKNAYRLKLRSPTFSNMHLFDEVCQGMLIADALALMGSLDLVIPEIDR.

The protein belongs to the complex I 49 kDa subunit family. NDH-1 is composed of 14 different subunits. Subunits NuoB, C, D, E, F, and G constitute the peripheral sector of the complex.

It localises to the cell inner membrane. The catalysed reaction is a quinone + NADH + 5 H(+)(in) = a quinol + NAD(+) + 4 H(+)(out). NDH-1 shuttles electrons from NADH, via FMN and iron-sulfur (Fe-S) centers, to quinones in the respiratory chain. The immediate electron acceptor for the enzyme in this species is believed to be ubiquinone. Couples the redox reaction to proton translocation (for every two electrons transferred, four hydrogen ions are translocated across the cytoplasmic membrane), and thus conserves the redox energy in a proton gradient. The sequence is that of NADH-quinone oxidoreductase subunit D from Desulfotalea psychrophila (strain LSv54 / DSM 12343).